The sequence spans 206 residues: Large ribosomal subunit protein uL4 (206 aa).

Residues 63-97 (MYKQKGTGRARHHSARAPQFRGGGKAHGPVVRSHE) form a disordered region. Residues 64-77 (YKQKGTGRARHHSA) are compositionally biased toward basic residues.

It belongs to the universal ribosomal protein uL4 family. Part of the 50S ribosomal subunit.

Functionally, one of the primary rRNA binding proteins, this protein initially binds near the 5'-end of the 23S rRNA. It is important during the early stages of 50S assembly. It makes multiple contacts with different domains of the 23S rRNA in the assembled 50S subunit and ribosome. Forms part of the polypeptide exit tunnel. The chain is Large ribosomal subunit protein uL4 from Rhizobium etli (strain ATCC 51251 / DSM 11541 / JCM 21823 / NBRC 15573 / CFN 42).